Consider the following 117-residue polypeptide: Immunoglobulin heavy variable 1-69-2 (117 aa).

An N-terminal signal peptide occupies residues 1-19; it reads MDCTWRILLLVAAATGTHA. Residues 20-44 are framework-1; it reads EVQLVQSGAEVKKPGATVKISCKVS. The Ig-like domain occupies 20–117; the sequence is EVQLVQSGAE…EDTAVYYCAT (98 aa). A disulfide bridge links Cys41 with Cys115. The tract at residues 45–52 is complementarity-determining-1; it reads GYTFTDYY. Positions 53 to 69 are framework-2; it reads MHWVQQAPGKGLEWMGL. The segment at 70–77 is complementarity-determining-2; it reads VDPEDGET. The interval 78 to 115 is framework-3; the sequence is IYAEKFQGRVTITADTSTDTAYMELSSLRSEDTAVYYC. Residues 116-117 form a complementarity-determining-3 region; it reads AT.

Immunoglobulins are composed of two identical heavy chains and two identical light chains; disulfide-linked.

It localises to the secreted. The protein resides in the cell membrane. Its function is as follows. V region of the variable domain of immunoglobulin heavy chains that participates in the antigen recognition. Immunoglobulins, also known as antibodies, are membrane-bound or secreted glycoproteins produced by B lymphocytes. In the recognition phase of humoral immunity, the membrane-bound immunoglobulins serve as receptors which, upon binding of a specific antigen, trigger the clonal expansion and differentiation of B lymphocytes into immunoglobulins-secreting plasma cells. Secreted immunoglobulins mediate the effector phase of humoral immunity, which results in the elimination of bound antigens. The antigen binding site is formed by the variable domain of one heavy chain, together with that of its associated light chain. Thus, each immunoglobulin has two antigen binding sites with remarkable affinity for a particular antigen. The variable domains are assembled by a process called V-(D)-J rearrangement and can then be subjected to somatic hypermutations which, after exposure to antigen and selection, allow affinity maturation for a particular antigen. The chain is Immunoglobulin heavy variable 1-69-2 from Homo sapiens (Human).